The primary structure comprises 962 residues: Glycine dehydrogenase (decarboxylating) (962 aa).

An N6-(pyridoxal phosphate)lysine modification is found at Lys-710.

The protein belongs to the GcvP family. In terms of assembly, the glycine cleavage system is composed of four proteins: P, T, L and H. It depends on pyridoxal 5'-phosphate as a cofactor.

It carries out the reaction N(6)-[(R)-lipoyl]-L-lysyl-[glycine-cleavage complex H protein] + glycine + H(+) = N(6)-[(R)-S(8)-aminomethyldihydrolipoyl]-L-lysyl-[glycine-cleavage complex H protein] + CO2. Its function is as follows. The glycine cleavage system catalyzes the degradation of glycine. The P protein binds the alpha-amino group of glycine through its pyridoxal phosphate cofactor; CO(2) is released and the remaining methylamine moiety is then transferred to the lipoamide cofactor of the H protein. This Idiomarina loihiensis (strain ATCC BAA-735 / DSM 15497 / L2-TR) protein is Glycine dehydrogenase (decarboxylating).